The primary structure comprises 487 residues: Glycogen synthase (487 aa).

Lys-20 is an ADP-alpha-D-glucose binding site.

The protein belongs to the glycosyltransferase 1 family. Bacterial/plant glycogen synthase subfamily.

The catalysed reaction is [(1-&gt;4)-alpha-D-glucosyl](n) + ADP-alpha-D-glucose = [(1-&gt;4)-alpha-D-glucosyl](n+1) + ADP + H(+). The protein operates within glycan biosynthesis; glycogen biosynthesis. Functionally, synthesizes alpha-1,4-glucan chains using ADP-glucose. This chain is Glycogen synthase, found in Aliivibrio fischeri (strain MJ11) (Vibrio fischeri).